The chain runs to 360 residues: 3-isopropylmalate dehydrogenase (360 aa).

Residues Arg66–Arg75 are compositionally biased toward basic residues. The tract at residues Arg66–Val101 is disordered. Positions 133 and 223 each coordinate substrate. 3 residues coordinate Mg(2+): Asp223, Asp247, and Asp251.

It belongs to the isocitrate and isopropylmalate dehydrogenases family. LeuB type 1 subfamily. Homodimer. Mg(2+) is required as a cofactor. Requires Mn(2+) as cofactor.

The protein resides in the cytoplasm. The catalysed reaction is (2R,3S)-3-isopropylmalate + NAD(+) = 4-methyl-2-oxopentanoate + CO2 + NADH. Its pathway is amino-acid biosynthesis; L-leucine biosynthesis; L-leucine from 3-methyl-2-oxobutanoate: step 3/4. Catalyzes the oxidation of 3-carboxy-2-hydroxy-4-methylpentanoate (3-isopropylmalate) to 3-carboxy-4-methyl-2-oxopentanoate. The product decarboxylates to 4-methyl-2 oxopentanoate. The protein is 3-isopropylmalate dehydrogenase (leuB) of Azotobacter vinelandii.